The primary structure comprises 268 residues: MTEQFQHRARKRFGQNFLHDAGVIDKILRAIRAKPEDRLLEIGPGQGALTEGLLNSGAQLDVVELDKDLIPILNSQFASQPNFNLHQGDALKFDFNTLGAEPRSLRVVGNLPYNISTPLIFHLLQNASLIRDMHFMLQKEVVERMAAGPGGGDWGRLSIMVQYHCRVEHLFNVGPGAFNPPPKVDSAIVRLVPYETLPHPAKDHRVLERVVREAFNQRRKTLRNTLKLLLSSDEITASGVDGSLRPEQLDLAAFVRLADTLSEKVLTE.

Residues N16, L18, G43, E64, D89, and N110 each contribute to the S-adenosyl-L-methionine site.

Belongs to the class I-like SAM-binding methyltransferase superfamily. rRNA adenine N(6)-methyltransferase family. RsmA subfamily.

It is found in the cytoplasm. It catalyses the reaction adenosine(1518)/adenosine(1519) in 16S rRNA + 4 S-adenosyl-L-methionine = N(6)-dimethyladenosine(1518)/N(6)-dimethyladenosine(1519) in 16S rRNA + 4 S-adenosyl-L-homocysteine + 4 H(+). In terms of biological role, specifically dimethylates two adjacent adenosines (A1518 and A1519) in the loop of a conserved hairpin near the 3'-end of 16S rRNA in the 30S particle. May play a critical role in biogenesis of 30S subunits. This is Ribosomal RNA small subunit methyltransferase A from Pseudomonas syringae pv. tomato (strain ATCC BAA-871 / DC3000).